A 156-amino-acid chain; its full sequence is Ribosomal RNA large subunit methyltransferase H (156 aa).

S-adenosyl-L-methionine-binding positions include Leu-73, Gly-104, and 123-128; that span reads LSPLTL.

The protein belongs to the RNA methyltransferase RlmH family. As to quaternary structure, homodimer.

It localises to the cytoplasm. It carries out the reaction pseudouridine(1915) in 23S rRNA + S-adenosyl-L-methionine = N(3)-methylpseudouridine(1915) in 23S rRNA + S-adenosyl-L-homocysteine + H(+). Specifically methylates the pseudouridine at position 1915 (m3Psi1915) in 23S rRNA. The polypeptide is Ribosomal RNA large subunit methyltransferase H (Yersinia enterocolitica serotype O:8 / biotype 1B (strain NCTC 13174 / 8081)).